The primary structure comprises 1145 residues: Cation channel sperm-associated auxiliary subunit gamma 2 (1145 aa).

The first 38 residues, methionine 1–alanine 38, serve as a signal peptide directing secretion. Residues glutamate 39–arginine 1061 lie on the Extracellular side of the membrane. Cystine bridges form between cysteine 45–cysteine 106 and cysteine 160–cysteine 166. N-linked (GlcNAc...) asparagine glycosylation occurs at asparagine 103. Asparagine 178 is a glycosylation site (N-linked (GlcNAc...) asparagine). Residues cysteine 289 and cysteine 344 are joined by a disulfide bond. N-linked (GlcNAc...) asparagine glycans are attached at residues asparagine 356, asparagine 402, asparagine 672, and asparagine 743. 6 disulfide bridges follow: cysteine 395/cysteine 403, cysteine 634/cysteine 856, cysteine 802/cysteine 830, cysteine 878/cysteine 1042, cysteine 905/cysteine 914, and cysteine 1006/cysteine 1012. The N-linked (GlcNAc...) asparagine glycan is linked to asparagine 1038. A helical membrane pass occupies residues threonine 1062–phenylalanine 1083. The Cytoplasmic portion of the chain corresponds to cysteine 1084–alanine 1145.

The protein belongs to the CATSPERG family. As to quaternary structure, component of the CatSper complex or CatSpermasome composed of the core pore-forming members CATSPER1, CATSPER2, CATSPER3 and CATSPER4 as well as auxiliary members CATSPERB, CATSPERG2, CATSPERD, CATSPERE, CATSPERZ, C2CD6/CATSPERT, SLCO6C1, TMEM249, TMEM262 and EFCAB9. HSPA1 may be an additional auxiliary complex member. The core complex members CATSPER1, CATSPER2, CATSPER3 and CATSPER4 form a heterotetrameric channel. The auxiliary CATSPERB, CATSPERG2, CATSPERD and CATSPERE subunits form a pavilion-like structure over the pore which stabilizes the complex through interactions with CATSPER4, CATSPER3, CATSPER1 and CATSPER2 respectively. SLCO6C1 interacts with CATSPERE and TMEM262/CATSPERH interacts with CATSPERB, further stabilizing the complex. C2CD6/CATSPERT interacts at least with CATSPERD and is required for targeting the CatSper complex in the flagellar membrane. Testis-specific. Specifically expressed in the principal piece of the sperm tail (at protein level). Expressed in spermatocytes and spermatids within the seminiferous tubule but not in interstitial cells.

It localises to the cell projection. The protein resides in the cilium. The protein localises to the flagellum membrane. Functionally, auxiliary component of the CatSper complex, a complex involved in sperm cell hyperactivation. Sperm cell hyperactivation is needed for sperm motility which is essential late in the preparation of sperm for fertilization. The protein is Cation channel sperm-associated auxiliary subunit gamma 2 of Mus musculus (Mouse).